Consider the following 190-residue polypeptide: Glutamyl-tRNA(Gln) amidotransferase subunit C, mitochondrial (190 aa).

A mitochondrion-targeting transit peptide spans methionine 1 to phenylalanine 96. The segment at lysine 28–serine 57 is disordered.

It belongs to the GatC family. In terms of assembly, subunit of the heterotrimeric GatCAB amidotransferase (AdT) complex, composed of A, B and C subunits.

It localises to the mitochondrion. The enzyme catalyses L-glutamyl-tRNA(Gln) + L-glutamine + ATP + H2O = L-glutaminyl-tRNA(Gln) + L-glutamate + ADP + phosphate + H(+). Functionally, allows the formation of correctly charged Gln-tRNA(Gln) through the transamidation of misacylated Glu-tRNA(Gln) in the mitochondria. The reaction takes place in the presence of glutamine and ATP through an activated gamma-phospho-Glu-tRNA(Gln). This is Glutamyl-tRNA(Gln) amidotransferase subunit C, mitochondrial from Loa loa (Eye worm).